We begin with the raw amino-acid sequence, 278 residues long: Large ribosomal subunit protein uL2 (278 aa).

Disordered stretches follow at residues 33 to 53 (LTEG…TSRG) and 221 to 278 (RGVA…KKKR). Basic residues predominate over residues 269–278 (IRSRHAKKKR).

This sequence belongs to the universal ribosomal protein uL2 family. In terms of assembly, part of the 50S ribosomal subunit. Forms a bridge to the 30S subunit in the 70S ribosome.

Functionally, one of the primary rRNA binding proteins. Required for association of the 30S and 50S subunits to form the 70S ribosome, for tRNA binding and peptide bond formation. It has been suggested to have peptidyltransferase activity; this is somewhat controversial. Makes several contacts with the 16S rRNA in the 70S ribosome. The chain is Large ribosomal subunit protein uL2 from Novosphingobium aromaticivorans (strain ATCC 700278 / DSM 12444 / CCUG 56034 / CIP 105152 / NBRC 16084 / F199).